The primary structure comprises 652 residues: Regulator of DNA class I crossover intermediates 1 (652 aa).

Positions 1 to 231 form a DNA-binding region, binds DNA containing a D-loop; the sequence is MNWVGGSRSR…TLFERLNSLG (231 aa). Disordered regions lie at residues 363–434 and 469–506; these read NKTS…NIPS and KISL…EDQI. Basic and acidic residues predominate over residues 377–388; sequence YQREYNKNERND. Residues 389 to 401 show a composition bias toward polar residues; the sequence is LSTSFENDYYPSS. Over residues 402 to 417 the composition is skewed to basic and acidic residues; it reads SERKEKFENDYQEKTP. Over residues 473–498 the composition is skewed to low complexity; that stretch reads DSAQSSRSTSYSPRPTDSCFSSSSDL.

In terms of assembly, interacts with MSH5. Interacts with TEX11.

The protein localises to the chromosome. Functionally, involved in recombination, probably acting by stabilizing recombination intermediates during meiotic crossover formation. Required for normal germline development and fertility. Required for meiotic progression, complete chromosomal synapsis and crossover formation. Binds double-stranded DNA. However, also binds branched DNA molecules, such as those containing a D-loop or Holliday junction structure. Probably not required for formation of DNA double-strand breaks (DSBs). Also binds RNA in an RNA structure-independent manner, with a preference for binding 3'-UTR regions of mRNAs; may stabilize bound RNAs. The sequence is that of Regulator of DNA class I crossover intermediates 1 from Homo sapiens (Human).